Consider the following 484-residue polypeptide: Nuclear rim protein 1 (484 aa).

S3 bears the Phosphoserine mark. 2 helical membrane passes run 145-165 and 237-257; these read FTIFILLSLNLYVSCKFMFGY and IPTNFIINLFVSFSPTAIVFL. A disordered region spans residues 416–457; sequence SSNENLEKGGAFLPNQDQNRPSKSLSPLRKTPLSARQKRFEG. S417 carries the post-translational modification Phosphoserine. Residues 430–440 show a composition bias toward polar residues; that stretch reads NQDQNRPSKSL. Residue S474 is modified to Phosphoserine.

Belongs to the NUR1 family. As to quaternary structure, interacts with CSM1.

Its subcellular location is the nucleus membrane. In terms of biological role, member of a perinuclear network that controls recombination at multiple loci to maintain genome stability. Required for rDNA repeat stability. This Saccharomyces cerevisiae (strain JAY291) (Baker's yeast) protein is Nuclear rim protein 1 (NUR1).